A 354-amino-acid chain; its full sequence is Protein RecA (354 aa).

Gly-67–Thr-74 provides a ligand contact to ATP.

Belongs to the RecA family.

The protein localises to the cytoplasm. Functionally, can catalyze the hydrolysis of ATP in the presence of single-stranded DNA, the ATP-dependent uptake of single-stranded DNA by duplex DNA, and the ATP-dependent hybridization of homologous single-stranded DNAs. It interacts with LexA causing its activation and leading to its autocatalytic cleavage. In Yersinia enterocolitica serotype O:8 / biotype 1B (strain NCTC 13174 / 8081), this protein is Protein RecA.